The following is a 561-amino-acid chain: Bifunctional NAD(P)H-hydrate repair enzyme (561 aa).

The NAD(P)H-hydrate epimerase stretch occupies residues M1–A241. The YjeF N-terminal domain maps to L29 to A235. Positions N77–D81 are NADPHX 1; for epimerase activity. K(+) is bound by residues N78 and D145. Positions G149–P155 are NADPHX 1; for epimerase activity. 2 residues coordinate (6S)-NADPHX: Y160 and D178. K(+) is bound at residue S181. A YjeF C-terminal domain is found at L249–S548. The ADP-dependent (S)-NAD(P)H-hydrate dehydratase stretch occupies residues L249–L561. (6S)-NADPHX is bound at residue G351. The tract at residues H417–R423 is NADPHX 2; for dehydratase activity. ADP contacts are provided by residues K454–T458 and N475–G484. Residue D485 coordinates (6S)-NADPHX.

This sequence in the N-terminal section; belongs to the NnrE/AIBP family. The protein in the C-terminal section; belongs to the NnrD/CARKD family. K(+) is required as a cofactor.

It catalyses the reaction (6S)-NADHX + ADP = AMP + phosphate + NADH + H(+). The catalysed reaction is (6S)-NADPHX + ADP = AMP + phosphate + NADPH + H(+). It carries out the reaction (6R)-NADHX = (6S)-NADHX. The enzyme catalyses (6R)-NADPHX = (6S)-NADPHX. In terms of biological role, bifunctional enzyme that catalyzes the epimerization of the S- and R-forms of NAD(P)HX and the dehydration of the S-form of NAD(P)HX at the expense of ADP, which is converted to AMP. This allows the repair of both epimers of NAD(P)HX, a damaged form of NAD(P)H that is a result of enzymatic or heat-dependent hydration. The sequence is that of Bifunctional NAD(P)H-hydrate repair enzyme from Leishmania braziliensis.